The sequence spans 128 residues: L-ectoine synthase (128 aa).

This sequence belongs to the ectoine synthase family.

The enzyme catalyses (2S)-4-acetamido-2-aminobutanoate = L-ectoine + H2O. It participates in amine and polyamine biosynthesis; ectoine biosynthesis; L-ectoine from L-aspartate 4-semialdehyde: step 3/3. Catalyzes the circularization of gamma-N-acetyl-alpha,gamma-diaminobutyric acid (ADABA) to ectoine (1,4,5,6-tetrahydro-2-methyl-4-pyrimidine carboxylic acid), which is an excellent osmoprotectant. In Aliivibrio fischeri (strain MJ11) (Vibrio fischeri), this protein is L-ectoine synthase.